The primary structure comprises 157 residues: Protein-export protein SecB (157 aa).

The protein belongs to the SecB family. As to quaternary structure, homotetramer, a dimer of dimers. One homotetramer interacts with 1 SecA dimer.

The protein resides in the cytoplasm. One of the proteins required for the normal export of preproteins out of the cell cytoplasm. It is a molecular chaperone that binds to a subset of precursor proteins, maintaining them in a translocation-competent state. It also specifically binds to its receptor SecA. The chain is Protein-export protein SecB from Magnetococcus marinus (strain ATCC BAA-1437 / JCM 17883 / MC-1).